Here is a 486-residue protein sequence, read N- to C-terminus: F-box protein At1g80960 (486 aa).

In terms of domain architecture, F-box spans 49–97 (VDWISKLPDDVLLIILSRLSTEEAIRTSVVSKRWEHVWNQMSHLVFDMR).

In Arabidopsis thaliana (Mouse-ear cress), this protein is F-box protein At1g80960.